A 639-amino-acid chain; its full sequence is Uridine permease (639 aa).

Residues 1-37 (MPVSDSGFDNSSKTMKDDTIPTEDYEEITKESEMGDA) are disordered. The Cytoplasmic portion of the chain corresponds to 1–162 (MPVSDSGFDN…LQLGLNWWQT (162 aa)). At T54 the chain carries Phosphothreonine. At S56 the chain carries Phosphoserine. The helical transmembrane segment at 163 to 180 (WICIWVGYTFVAFFLILG) threads the bilayer. Topologically, residues 181–200 (SKVGNNYHISFPISSRVSFG) are extracellular. A helical transmembrane segment spans residues 201–225 (IYFSIWIVINRVVMACVWNSTLAYI). The Cytoplasmic segment spans residues 226-259 (GSQCVQLMLKAIFGTNLNTRIKDTIKNPNLTNFE). A helical membrane pass occupies residues 260–276 (FMCFMVFWVACLPFLWF). The Extracellular portion of the chain corresponds to 277–283 (PPDKLRH). A helical transmembrane segment spans residues 284–305 (IFALKSAITPFAAFGFLIWTLC). Topologically, residues 306-367 (KAKGHLALGS…KTYKSSVYSQ (62 aa)) are cytoplasmic. Residues 368–392 (LIALPVCYAIISLIGILSVSAAYTL) traverse the membrane as a helical segment. At 393–416 (YGVNYWSPLDILNRYLDNYTSGNR) the chain is on the extracellular side. A helical membrane pass occupies residues 417–435 (AGVFLISFIFAFDQLGANL). Topologically, residues 436-460 (SGNSIPAGTDLTALLPKFINIRRGS) are cytoplasmic. A helical transmembrane segment spans residues 461–477 (YICALISLAICPWDLLS). At 478-483 (SSSKFT) the chain is on the extracellular side. Residues 484–507 (TALAAYAVFLSAIAGVISADYFIV) traverse the membrane as a helical segment. The Cytoplasmic segment spans residues 508–537 (RKGYVNIFHCYTDKPGSYYMYNKYGTNWRA). The chain crosses the membrane as a helical span at residues 538 to 562 (VVAYIFGIAPNFAGFLGSVGVSVPI). Residues 563-572 (GAMKVYYLNY) are Extracellular-facing. The chain crosses the membrane as a helical span at residues 573–590 (FVGYLLAALSYCILVYFY). At 591–639 (PIKGIPGDAKITDRKWLEEWVEVEEFGTEREAFEEYGGVSTGYEKIRYI) the chain is on the cytoplasmic side. Residue K635 forms a Glycyl lysine isopeptide (Lys-Gly) (interchain with G-Cter in ubiquitin) linkage.

Belongs to the purine-cytosine permease (2.A.39) family.

It is found in the membrane. High-affinity transport of uridine. The polypeptide is Uridine permease (FUI1) (Saccharomyces cerevisiae (strain ATCC 204508 / S288c) (Baker's yeast)).